The sequence spans 344 residues: N-lysine methyltransferase KMT5A-A (344 aa).

Positions 143–176 (TSSKHRKPARRKVKRSTKRAAESKSPANRKVTDY) are disordered. Basic residues predominate over residues 145-160 (SKHRKPARRKVKRSTK). Residues 208–329 (DGMMVRFIEG…EGEELLYDYG (122 aa)) enclose the SET domain. S-adenosyl-L-methionine is bound by residues 218-220 (KGR), Tyr263, and 290-291 (NH).

This sequence belongs to the class V-like SAM-binding methyltransferase superfamily. Histone-lysine methyltransferase family. PR/SET subfamily.

It is found in the nucleus. The protein localises to the chromosome. The catalysed reaction is L-lysyl(20)-[histone H4] + S-adenosyl-L-methionine = N(6)-methyl-L-lysyl(20)-[histone H4] + S-adenosyl-L-homocysteine + H(+). The enzyme catalyses L-lysyl-[protein] + S-adenosyl-L-methionine = N(6)-methyl-L-lysyl-[protein] + S-adenosyl-L-homocysteine + H(+). Protein-lysine N-methyltransferase that monomethylates both histones and non-histone proteins. Specifically monomethylates 'Lys-20' of histone H4 (H4K20me1). H4K20me1 is enriched during mitosis and represents a specific tag for epigenetic transcriptional repression. Mainly functions in euchromatin regions, thereby playing a central role in the silencing of euchromatic genes. Required for cell proliferation, probably by contributing to the maintenance of proper higher-order structure of DNA during mitosis. Involved in chromosome condensation and proper cytokinesis. The protein is N-lysine methyltransferase KMT5A-A of Danio rerio (Zebrafish).